The following is a 153-amino-acid chain: Iron-sulfur cluster assembly scaffold protein IscU 1 (153 aa).

The [2Fe-2S] cluster site is built by Cys33, Cys58, His101, and Cys102.

The protein belongs to the NifU family. In terms of assembly, forms a heterotetramer with IscS2.

Functionally, a scaffold on which IscS assembles Fe-S clusters. Subsequently gives the nascent cluster to other proteins. It is likely that Fe-S cluster coordination is flexible as the role of this complex is to build and then hand off Fe-S clusters. The chain is Iron-sulfur cluster assembly scaffold protein IscU 1 (iscU1) from Archaeoglobus fulgidus (strain ATCC 49558 / DSM 4304 / JCM 9628 / NBRC 100126 / VC-16).